The chain runs to 306 residues: MLKFILRRCLEAIPTLFILITISFFMMRLAPGSPFTGERTLPPEVMANIEAKYHLNDPIMTQYFSYLKQLAHGDFGPSFKYKDYSVNDLVASSFPVSAKLGAAAFFLAVILGVSAGVIAALKQNTKWDYTVMGLAMTGVVIPSFVVAPLLVMIFAIILHWLPGGGWNGGALKFMILPMVALSLAYIASIARITRGSMIEVLHSNFIRTARAKGLPMRRIILRHALKPALLPVLSYMGPAFVGIITGSMVIETIYGLPGIGQLFVNGALNRDYSLVLSLTILVGALTILFNAIVDVLYAVIDPKIRY.

Topologically, residues 1–11 (MLKFILRRCLE) are cytoplasmic. Residues 12-32 (AIPTLFILITISFFMMRLAPG) traverse the membrane as a helical segment. The Periplasmic segment spans residues 33–99 (SPFTGERTLP…VASSFPVSAK (67 aa)). The ABC transmembrane type-1 domain occupies 94–293 (FPVSAKLGAA…ALTILFNAIV (200 aa)). The chain crosses the membrane as a helical span at residues 100-120 (LGAAAFFLAVILGVSAGVIAA). Residues 121-137 (LKQNTKWDYTVMGLAMT) are Cytoplasmic-facing. The chain crosses the membrane as a helical span at residues 138 to 158 (GVVIPSFVVAPLLVMIFAIIL). Topologically, residues 159–169 (HWLPGGGWNGG) are periplasmic. The helical transmembrane segment at 170–190 (ALKFMILPMVALSLAYIASIA) threads the bilayer. Over 191–229 (RITRGSMIEVLHSNFIRTARAKGLPMRRIILRHALKPAL) the chain is Cytoplasmic. A helical membrane pass occupies residues 230–250 (LPVLSYMGPAFVGIITGSMVI). The Periplasmic segment spans residues 251–279 (ETIYGLPGIGQLFVNGALNRDYSLVLSLT). A helical membrane pass occupies residues 280–300 (ILVGALTILFNAIVDVLYAVI). The Cytoplasmic segment spans residues 301–306 (DPKIRY).

Belongs to the binding-protein-dependent transport system permease family. OppBC subfamily. As to quaternary structure, the complex is composed of two ATP-binding proteins (OppD and OppF), two transmembrane proteins (OppB and OppC) and a solute-binding protein (OppA).

The protein localises to the cell inner membrane. In terms of biological role, part of the ABC transporter complex OppABCDF involved in the uptake of oligopeptides. Probably responsible for the translocation of the substrate across the membrane. In Shigella flexneri, this protein is Oligopeptide transport system permease protein OppB (oppB).